The primary structure comprises 142 residues: Large ribosomal subunit protein uL11 (142 aa).

Belongs to the universal ribosomal protein uL11 family. In terms of assembly, part of the ribosomal stalk of the 50S ribosomal subunit. Interacts with L10 and the large rRNA to form the base of the stalk. L10 forms an elongated spine to which L12 dimers bind in a sequential fashion forming a multimeric L10(L12)X complex. In terms of processing, one or more lysine residues are methylated.

Its function is as follows. Forms part of the ribosomal stalk which helps the ribosome interact with GTP-bound translation factors. This is Large ribosomal subunit protein uL11 from Thermobifida fusca (strain YX).